Reading from the N-terminus, the 932-residue chain is Protein translocase subunit SecA (932 aa).

Residues Gln87, 105–109 (GEGKT), and Asp515 each bind ATP. Zn(2+)-binding residues include Cys916, Cys918, Cys927, and His928.

Belongs to the SecA family. As to quaternary structure, monomer and homodimer. Part of the essential Sec protein translocation apparatus which comprises SecA, SecYEG and auxiliary proteins SecDF-YajC and YidC. Zn(2+) serves as cofactor.

It localises to the cell inner membrane. The protein localises to the cytoplasm. The catalysed reaction is ATP + H2O + cellular proteinSide 1 = ADP + phosphate + cellular proteinSide 2.. Functionally, part of the Sec protein translocase complex. Interacts with the SecYEG preprotein conducting channel. Has a central role in coupling the hydrolysis of ATP to the transfer of proteins into and across the cell membrane, serving both as a receptor for the preprotein-SecB complex and as an ATP-driven molecular motor driving the stepwise translocation of polypeptide chains across the membrane. The sequence is that of Protein translocase subunit SecA from Burkholderia lata (strain ATCC 17760 / DSM 23089 / LMG 22485 / NCIMB 9086 / R18194 / 383).